The primary structure comprises 145 residues: Catabolic 3-dehydroquinase (145 aa).

The active-site Proton acceptor is tyrosine 24. Asparagine 77, histidine 83, and aspartate 90 together coordinate substrate. Histidine 103 serves as the catalytic Proton donor. Residues isoleucine 104–threonine 105 and arginine 114 contribute to the substrate site.

It belongs to the type-II 3-dehydroquinase family. As to quaternary structure, homododecamer. Adopts a ring-like structure, composed of an arrangement of two hexameric rings stacked on top of one another.

The catalysed reaction is 3-dehydroquinate = 3-dehydroshikimate + H2O. Its pathway is aromatic compound metabolism; 3,4-dihydroxybenzoate biosynthesis; 3,4-dihydroxybenzoate from 3-dehydroquinate: step 1/2. Is involved in the catabolism of quinate. Allows the utilization of quinate as carbon source via the beta-ketoadipate pathway. The sequence is that of Catabolic 3-dehydroquinase from Clavispora lusitaniae (strain ATCC 42720) (Yeast).